The chain runs to 357 residues: Peptide chain release factor 1 (357 aa).

N5-methylglutamine is present on glutamine 236.

Belongs to the prokaryotic/mitochondrial release factor family. Methylated by PrmC. Methylation increases the termination efficiency of RF1.

It localises to the cytoplasm. Its function is as follows. Peptide chain release factor 1 directs the termination of translation in response to the peptide chain termination codons UAG and UAA. This chain is Peptide chain release factor 1, found in Mycobacterium sp. (strain JLS).